Reading from the N-terminus, the 353-residue chain is Abasic site processing protein HMCES (353 aa).

The Nucleophile role is filled by Cys-2. Position 2 is a thiazolidine linkage to a ring-opened DNA abasic site (Cys-2). Glu-127 is a catalytic residue. Residues Lys-148 and Lys-151 each participate in a glycyl lysine isopeptide (Lys-Gly) (interchain with G-Cter in SUMO2) cross-link. Position 160 is a phosphoserine (Ser-160). Glycyl lysine isopeptide (Lys-Gly) (interchain with G-Cter in SUMO2) cross-links involve residues Lys-274 and Lys-275. The disordered stretch occupies residues 292 to 353 (TKSPKKEVPD…DEPVAKRPNS (62 aa)). A Phosphoserine modification is found at Ser-294. Over residues 295 to 307 (PKKEVPDSPKKDA) the composition is skewed to basic and acidic residues. Lys-305 participates in a covalent cross-link: Glycyl lysine isopeptide (Lys-Gly) (interchain with G-Cter in SUMO2). A Phosphoserine modification is found at Ser-321. Positions 332 to 338 (SLLDRWL) match the PIP-box motif. Basic and acidic residues predominate over residues 336-353 (RWLKQEKEDEPVAKRPNS). Glycyl lysine isopeptide (Lys-Gly) (interchain with G-Cter in SUMO2) cross-links involve residues Lys-339 and Lys-342.

The protein belongs to the SOS response-associated peptidase family. As to quaternary structure, interacts (via PIP-box motif) with PCNA. Post-translationally, ubiquitinated; the covalent HMCES DNA-protein cross-link is ubiquitinated, leading to its degradation by the proteasome.

The protein resides in the chromosome. Its activity is regulated as follows. Formation and reversal of DNA-protein cross-link depends on DNA context. Catalyzes formation of the thiazolidine linkage in presence of abasic sites in single-stranded DNA. Mediates the reversal of the thiazolidine cross-link in presence of double stranded DNA. Sensor of abasic sites in single-stranded DNA (ssDNA) required to preserve genome integrity by promoting error-free repair of abasic sites. Acts as an enzyme that recognizes and binds abasic sites in ssDNA at replication forks and chemically modifies the lesion by forming a covalent cross-link with DNA: forms a stable thiazolidine linkage between a ring-opened abasic site and the alpha-amino and sulfhydryl substituents of its N-terminal catalytic cysteine residue. Promotes error-free repair by protecting abasic sites from translesion synthesis (TLS) polymerases and endonucleases that are error-prone and would generate mutations and double-strand breaks. The HMCES DNA-protein cross-link is then either reversed or degraded. HMCES is able to catalyze the reversal of its thiazolidine cross-link and cycle between a cross-link and a non-cross-linked state depending on DNA context: mediates self-reversal of the thiazolidine cross-link in double stranded DNA, allowing APEX1 to initiate downstream repair of abasic sites. The HMCES DNA-protein cross-link can also be degraded by the SPRTN metalloprotease following unfolding by the BRIP1/FANCJ helicase. Has preference for ssDNA, but can also accommodate double-stranded DNA with 3' or 5' overhang (dsDNA), and dsDNA-ssDNA 3' junction. Plays a protective role during somatic hypermutation of immunoglobulin genes in B-cells: acts via its ability to form covalent cross-links with abasic sites, thereby limiting the accumulation of deletions in somatic hypermutation target regions. Also involved in class switch recombination (CSR) in B-cells independently of the formation of a DNA-protein cross-link: acts by binding and protecting ssDNA overhangs to promote DNA double-strand break repair through the microhomology-mediated alternative-end-joining (Alt-EJ) pathway. Acts as a protease: mediates autocatalytic processing of its N-terminal methionine in order to expose the catalytic cysteine. In Rattus norvegicus (Rat), this protein is Abasic site processing protein HMCES.